A 225-amino-acid polypeptide reads, in one-letter code: Cell division protein SepF (225 aa).

Residues 21-134 (DEYLDEPEPT…GPLFDEGGPL (114 aa)) form a disordered region. 3 stretches are compositionally biased toward basic and acidic residues: residues 28 to 54 (EPTR…RDFA), 77 to 86 (RYESPRHSSR), and 115 to 127 (TRSD…RGPL).

The protein belongs to the SepF family. As to quaternary structure, homodimer. Interacts with FtsZ.

The protein resides in the cytoplasm. Its function is as follows. Cell division protein that is part of the divisome complex and is recruited early to the Z-ring. Probably stimulates Z-ring formation, perhaps through the cross-linking of FtsZ protofilaments. Its function overlaps with FtsA. In Rhodococcus opacus (strain B4), this protein is Cell division protein SepF.